The chain runs to 499 residues: Putative antiporter subunit mnhD2 (499 aa).

The next 14 membrane-spanning stretches (helical) occupy residues 3-23, 33-53, 79-99, 109-129, 131-151, 162-182, 210-230, 241-261, 272-292, 309-329, 331-351, 370-390, 404-424, and 452-472; these read LSNL…ILVF, YLYL…LIYV, LSLI…AYGF, YHLP…FLTS, LFNL…LITL, IIYV…IGLL, ISLI…FMWL, LAAL…IRFF, IHPL…IGVI, IGFI…GAIF, LVND…LVYI, FGVA…FSGF, GNYI…YSLF, and ILSI…VVLN.

It belongs to the CPA3 antiporters (TC 2.A.63) subunit D family. As to quaternary structure, may form a heterooligomeric complex that consists of seven subunits: mnhA2, mnhB2, mnhC2, mnhD2, mnhE2, mnhF2 and mnhG2.

It is found in the cell membrane. Its function is as follows. Expression of the mnh2 operon in E.coli is not able to catalyze Na(+)Li(+)/H(+) antiport. It does however confer higher growth rates than the control strain at up to pH 9.5. The operon may encode an NADH-ubiquinone oxidoreductase. The polypeptide is Putative antiporter subunit mnhD2 (mnhD2) (Staphylococcus aureus).